The sequence spans 982 residues: Filament-like plant protein 4 (982 aa).

Coiled coils occupy residues 39 to 83 and 125 to 291; these read DQYT…VAKE and EDRA…RKKL. Residues 311-333 form a disordered region; sequence DHRQDHRQRRSPVRPSSPLMSPM. The segment covering 323–333 has biased composition (low complexity); it reads VRPSSPLMSPM. Residues 345 to 401 are a coiled coil; it reads DNMQKFHKENDLLTERLLAMEEETKMLKEALAKRNSELQVSRNLCAKTANRLQTLEA. Polar residues predominate over residues 423-433; it reads QNASNPPSMAS. Disordered regions lie at residues 423–466 and 687–711; these read QNAS…AKIK and QKDS…PDDC. Residues 452–475 adopt a coiled-coil conformation; it reads ELSQSNKDKANAKIKKTESANQLE. Residues 457–466 are compositionally biased toward basic and acidic residues; the sequence is NKDKANAKIK. Residues 693–705 show a composition bias toward polar residues; that stretch reads EHYQNGCSQSSDS. The stretch at 722–885 forms a coiled coil; sequence ATCKFTTEEF…AECQETILLL (164 aa). Composition is skewed to polar residues over residues 896–910 and 918–943; these read TEQV…QQAL and ATST…NTMK. The disordered stretch occupies residues 896–982; the sequence is TEQVASSPSQ…FSRFFSTKAK (87 aa).

Belongs to the FPP family. Interacts with WPP/MAF proteins.

The protein is Filament-like plant protein 4 (FPP4) of Arabidopsis thaliana (Mouse-ear cress).